The following is a 320-amino-acid chain: Malate dehydrogenase (320 aa).

NAD(+) contacts are provided by residues 10–15 (GAGMIG) and Asp34. Residues Arg83 and Arg89 each coordinate substrate. NAD(+) contacts are provided by residues Asn96 and 119–121 (ITN). Asn121 and Arg152 together coordinate substrate. The Proton acceptor role is filled by His176.

It belongs to the LDH/MDH superfamily. MDH type 3 family.

The enzyme catalyses (S)-malate + NAD(+) = oxaloacetate + NADH + H(+). Catalyzes the reversible oxidation of malate to oxaloacetate. The sequence is that of Malate dehydrogenase from Caulobacter sp. (strain K31).